The following is a 168-amino-acid chain: Cilia- and flagella-associated protein HOATZ (168 aa).

The segment at 142 to 168 (PKDKVPKSKEVLSESGLRDQEEVKALE) is disordered.

The protein belongs to the HOATZ family. In terms of tissue distribution, specifically expressed in tissues with motile cilia and flagella, such as brain ependyma, lung, testis, and oviduct but not in whole brain, liver,kidney, spleen, and eyeball.

The protein resides in the cytoplasm. It is found in the cell projection. The protein localises to the cilium. In terms of biological role, required for motile ciliogenesis and flagellar genesis by mediating the maturation of the glycolytic enzyme ENO4. This is Cilia- and flagella-associated protein HOATZ from Mus musculus (Mouse).